Reading from the N-terminus, the 318-residue chain is Methionyl-tRNA formyltransferase (318 aa).

(6S)-5,6,7,8-tetrahydrofolate is bound at residue 114–117; the sequence is SVLP.

The protein belongs to the Fmt family.

The enzyme catalyses L-methionyl-tRNA(fMet) + (6R)-10-formyltetrahydrofolate = N-formyl-L-methionyl-tRNA(fMet) + (6S)-5,6,7,8-tetrahydrofolate + H(+). Attaches a formyl group to the free amino group of methionyl-tRNA(fMet). The formyl group appears to play a dual role in the initiator identity of N-formylmethionyl-tRNA by promoting its recognition by IF2 and preventing the misappropriation of this tRNA by the elongation apparatus. The chain is Methionyl-tRNA formyltransferase from Bdellovibrio bacteriovorus (strain ATCC 15356 / DSM 50701 / NCIMB 9529 / HD100).